The chain runs to 139 residues: Actin-depolymerizing factor 4 (139 aa).

In terms of domain architecture, ADF-H spans 5–139 (SSGVAIHDDC…SLDALKDRVK (135 aa)).

The protein belongs to the actin-binding proteins ADF family. Interacts with LECRK1 (via kinase domain).

The protein resides in the cytoplasm. Its subcellular location is the cytoskeleton. Its function is as follows. Actin-depolymerizing protein. Severs actin filaments (F-actin) and binds to actin monomers. Involved in innate immunity. Required for the expression of defense-related genes PR1A, LOX2 and CHS1 upon biotic stresses. Required for basal resistance to the fungal blast (Magnaporthe grisea), bacterial blight (Xanthomonas oryzae pv. oryzae, Xoo) and the herbivorous insect brown planthopper (Nilaparvata lugens, BPH). Involved in the promotion of seed germination. Required for the expression of alpha-amylase genes during seed germination. The protein is Actin-depolymerizing factor 4 (ADF4) of Oryza sativa subsp. japonica (Rice).